The sequence spans 549 residues: Vacuolar fusion protein MON1 homolog A (549 aa).

2 disordered regions span residues 1-90 (MAAD…EQIS) and 109-137 (EEMRQSQEGKLEPSPQATRHDSVLSGKEE). The span at 110–119 (EMRQSQEGKL) shows a compositional bias: basic and acidic residues.

The protein belongs to the MON1/SAND family.

Functionally, plays an important role in membrane trafficking through the secretory apparatus. Not involved in endocytic trafficking to lysosomes. The sequence is that of Vacuolar fusion protein MON1 homolog A (MON1A) from Gallus gallus (Chicken).